The sequence spans 76 residues: Esculentin-2-ALb (76 aa).

Positions 1 to 22 (MFTMKKSLLLLFFLGTISLSLC) are cleaved as a signal peptide. A propeptide spanning residues 23–39 (EEERSADEDDGEKGVKR) is cleaved from the precursor. An intrachain disulfide couples Cys70 to Cys76.

As to expression, expressed by the skin glands.

Its subcellular location is the secreted. Its function is as follows. Antimicrobial peptide with activity against Gram-positive and Gram-negative bacteria and against fungi. Has been tested against S.aureus (MIC=1.25 ug/mL), B.pumilus (MIC=2.5 ug/mL), B.cereus (MIC=7.5 ug/mL), E.coli (MIC=12.5 ug/mL), B.dysenteriae (MIC=7.5 ug/mL), A.cacoaceticus (MIC=12.5 ug/mL), P.aeruginosa (MIC=50.0 ug/mL) and C.albicans (MIC=2.5 ug/mL). Also shows a weak hemolytic activity. This is Esculentin-2-ALb from Amolops loloensis (Lolokou Sucker Frog).